The chain runs to 304 residues: Ribosomal RNA large subunit methyltransferase F (304 aa).

This sequence belongs to the methyltransferase superfamily. METTL16/RlmF family.

It is found in the cytoplasm. The catalysed reaction is adenosine(1618) in 23S rRNA + S-adenosyl-L-methionine = N(6)-methyladenosine(1618) in 23S rRNA + S-adenosyl-L-homocysteine + H(+). Specifically methylates the adenine in position 1618 of 23S rRNA. The polypeptide is Ribosomal RNA large subunit methyltransferase F (Klebsiella pneumoniae (strain 342)).